We begin with the raw amino-acid sequence, 255 residues long: EEF1A lysine methyltransferase 4 (255 aa).

Residues Trp26 and Tyr30 each contribute to the S-adenosyl-L-methionine site. Tyr39 bears the Phosphotyrosine mark. S-adenosyl-L-methionine is bound by residues Trp41, Gly66, 88-89, 113-114, and Lys130; these read DY and DV. A Required for methyltransferase activity motif is present at residues 129–134; it reads EKGTLD.

This sequence belongs to the methyltransferase superfamily.

It catalyses the reaction L-lysyl-[protein] + S-adenosyl-L-methionine = N(6)-methyl-L-lysyl-[protein] + S-adenosyl-L-homocysteine + H(+). The catalysed reaction is N(6)-methyl-L-lysyl-[protein] + S-adenosyl-L-methionine = N(6),N(6)-dimethyl-L-lysyl-[protein] + S-adenosyl-L-homocysteine + H(+). It carries out the reaction N(6),N(6)-dimethyl-L-lysyl-[protein] + S-adenosyl-L-methionine = N(6),N(6),N(6)-trimethyl-L-lysyl-[protein] + S-adenosyl-L-homocysteine + H(+). Protein-lysine methyltransferase that efficiently catalyzes three successive methylations on 'Lys-36' in eukaryotic translation elongation factor 1 alpha (EEF1A1 or EEF1A2). This chain is EEF1A lysine methyltransferase 4, found in Homo sapiens (Human).